Consider the following 260-residue polypeptide: Tryptophan synthase alpha chain (260 aa).

Active-site proton acceptor residues include Glu52 and Asp63.

This sequence belongs to the TrpA family. As to quaternary structure, tetramer of two alpha and two beta chains.

It catalyses the reaction (1S,2R)-1-C-(indol-3-yl)glycerol 3-phosphate + L-serine = D-glyceraldehyde 3-phosphate + L-tryptophan + H2O. The protein operates within amino-acid biosynthesis; L-tryptophan biosynthesis; L-tryptophan from chorismate: step 5/5. Its function is as follows. The alpha subunit is responsible for the aldol cleavage of indoleglycerol phosphate to indole and glyceraldehyde 3-phosphate. The sequence is that of Tryptophan synthase alpha chain from Streptococcus thermophilus (strain ATCC BAA-491 / LMD-9).